The sequence spans 275 residues: Rhamnulose-1-phosphate aldolase (275 aa).

Glutamate 117 is a catalytic residue. The Zn(2+) site is built by histidine 141, histidine 143, and histidine 212.

This sequence belongs to the aldolase class II family. RhaD subfamily. In terms of assembly, homotetramer. It depends on Zn(2+) as a cofactor.

The protein localises to the cytoplasm. It catalyses the reaction L-rhamnulose 1-phosphate = (S)-lactaldehyde + dihydroxyacetone phosphate. It participates in carbohydrate degradation; L-rhamnose degradation; glycerone phosphate from L-rhamnose: step 3/3. In terms of biological role, catalyzes the reversible cleavage of L-rhamnulose-1-phosphate to dihydroxyacetone phosphate (DHAP) and L-lactaldehyde. In Citrobacter koseri (strain ATCC BAA-895 / CDC 4225-83 / SGSC4696), this protein is Rhamnulose-1-phosphate aldolase.